The chain runs to 142 residues: Peptide methionine sulfoxide reductase MsrB (142 aa).

Positions 2–125 (IKKNKEELND…NSAAIQFIPY (124 aa)) constitute a MsrB domain. C114 acts as the Nucleophile in catalysis.

Belongs to the MsrB Met sulfoxide reductase family.

The enzyme catalyses L-methionyl-[protein] + [thioredoxin]-disulfide + H2O = L-methionyl-(R)-S-oxide-[protein] + [thioredoxin]-dithiol. This chain is Peptide methionine sulfoxide reductase MsrB, found in Staphylococcus epidermidis (strain ATCC 35984 / DSM 28319 / BCRC 17069 / CCUG 31568 / BM 3577 / RP62A).